Reading from the N-terminus, the 257-residue chain is uncharacterized protein (257 aa).

This sequence to yeast YKR015c.

This is an uncharacterized protein from Saccharomyces cerevisiae (strain ATCC 204508 / S288c) (Baker's yeast).